The chain runs to 63 residues: Ferredoxin (63 aa).

Residues 2-29 (KVTVDQDLCIACGTCIDLCPSVFDWDDE) form the 4Fe-4S ferredoxin-type domain. [4Fe-4S] cluster is bound by residues Cys-10, Cys-13, Cys-16, and Cys-55.

Requires [4Fe-4S] cluster as cofactor.

Its function is as follows. Ferredoxins are iron-sulfur proteins that transfer electrons in a wide variety of metabolic reactions. This chain is Ferredoxin, found in Moorella thermoacetica (Clostridium thermoaceticum).